The following is a 176-amino-acid chain: Tubulin polymerization-promoting protein family member 3 (176 aa).

The tract at residues 132–151 (TGSHKERFDQTGKGKGKSGR) is disordered. Residues 134–151 (SHKERFDQTGKGKGKSGR) are compositionally biased toward basic and acidic residues.

It belongs to the TPPP family.

Its subcellular location is the cytoplasm. The protein resides in the cytoskeleton. Its function is as follows. Regulator of microtubule dynamic that has microtubule bundling activity. In Xenopus laevis (African clawed frog), this protein is Tubulin polymerization-promoting protein family member 3 (tppp3).